Here is a 456-residue protein sequence, read N- to C-terminus: Glycine--tRNA ligase (456 aa).

Positions 98 and 168 each coordinate substrate. ATP contacts are provided by residues 200–202 (RNE), 210–215 (FRTREF), 285–286 (EL), and 329–332 (GVER). 215 to 219 (FEQME) provides a ligand contact to substrate. 325 to 329 (EPSVG) contributes to the substrate binding site.

Belongs to the class-II aminoacyl-tRNA synthetase family. Homodimer.

It is found in the cytoplasm. It carries out the reaction tRNA(Gly) + glycine + ATP = glycyl-tRNA(Gly) + AMP + diphosphate. Functionally, catalyzes the attachment of glycine to tRNA(Gly). The polypeptide is Glycine--tRNA ligase (Mycoplasma capricolum subsp. capricolum (strain California kid / ATCC 27343 / NCTC 10154)).